A 490-amino-acid polypeptide reads, in one-letter code: Cytochrome P450 monooxygenase aclL (490 aa).

The helical transmembrane segment at 1-21 (MLFSLGPLTIVYGLVIFVVAK) threads the bilayer. The N-linked (GlcNAc...) asparagine glycan is linked to Asn-176. Residue Cys-434 coordinates heme.

The protein belongs to the cytochrome P450 family. It depends on heme as a cofactor.

It localises to the membrane. The protein operates within mycotoxin biosynthesis. Its function is as follows. Cytochrome P450 monooxygenase; part of the gene cluster that mediates the biosynthesis of aspirochlorine (or antibiotic A30641), an unusual halogenated spiro compound with distinctive antifungal properties due to selective inhibition of protein biosynthesis, and which is also active against bacteria, viruses, and murine tumor cells. The non-ribosomal peptide synthetase (NRPS) aclP is responsible the formation of the diketopiperazine (DKP) core from the condensation of 2 phenylalanine residues. One Phe residue is tailored into chlorotyrosine by hydroxylation and chlorination, whereas the second Phe undergoes an unprecedented C-C bond cleavage to be converted into glycine. After formation of the DKP, sulfur is incorporated into the DKP by conjugation with glutathione by aclG, followed by its stepwise degradation to the thiol by aclI, aclJ and aclK, and the dithiol oxidation by aclT. In addition, oxygenases (aclB, aclC, aclL and aclO) and O-methyltransferases (aclM and aclU) act as tailoring enzymes to produce the intermediate dechloroaspirochlorine. Ultimately, chlorination of dechloroaspirochlorine by the halogenase aclH is the last step in the aspirochlorine pathway. This chain is Cytochrome P450 monooxygenase aclL, found in Aspergillus oryzae (strain ATCC 42149 / RIB 40) (Yellow koji mold).